The primary structure comprises 300 residues: GTP-binding protein At2g22870 (300 aa).

The EngB-type G domain maps to 119 to 297 (DRPEIAILGR…LLHMSQLRNY (179 aa)). GTP is bound by residues 127-134 (GRSNVGKS), 154-158 (GKTQL), 172-175 (DLPG), 239-242 (TKCD), and 276-278 (TSS). Positions 134 and 156 each coordinate Mg(2+).

The protein belongs to the TRAFAC class TrmE-Era-EngA-EngB-Septin-like GTPase superfamily. EngB GTPase family. The cofactor is Mg(2+).

This chain is GTP-binding protein At2g22870 (EMB2001), found in Arabidopsis thaliana (Mouse-ear cress).